Reading from the N-terminus, the 61-residue chain is Small ribosomal subunit protein uS14B (61 aa).

Zn(2+) contacts are provided by cysteine 24, cysteine 27, cysteine 40, and cysteine 43.

The protein belongs to the universal ribosomal protein uS14 family. Zinc-binding uS14 subfamily. In terms of assembly, part of the 30S ribosomal subunit. Contacts proteins S3 and S10. The cofactor is Zn(2+).

Binds 16S rRNA, required for the assembly of 30S particles and may also be responsible for determining the conformation of the 16S rRNA at the A site. This chain is Small ribosomal subunit protein uS14B, found in Lacticaseibacillus paracasei (strain ATCC 334 / BCRC 17002 / CCUG 31169 / CIP 107868 / KCTC 3260 / NRRL B-441) (Lactobacillus paracasei).